The following is a 251-amino-acid chain: Hydroxyacylglutathione hydrolase (251 aa).

7 residues coordinate Zn(2+): His53, His55, Asp57, His58, His110, Asp127, and His165.

It belongs to the metallo-beta-lactamase superfamily. Glyoxalase II family. In terms of assembly, monomer. Zn(2+) is required as a cofactor.

It catalyses the reaction an S-(2-hydroxyacyl)glutathione + H2O = a 2-hydroxy carboxylate + glutathione + H(+). It participates in secondary metabolite metabolism; methylglyoxal degradation; (R)-lactate from methylglyoxal: step 2/2. In terms of biological role, thiolesterase that catalyzes the hydrolysis of S-D-lactoyl-glutathione to form glutathione and D-lactic acid. In Citrobacter koseri (strain ATCC BAA-895 / CDC 4225-83 / SGSC4696), this protein is Hydroxyacylglutathione hydrolase.